A 362-amino-acid polypeptide reads, in one-letter code: Atypical chemokine receptor 3 (362 aa).

The Extracellular segment spans residues 1-40; it reads MDLHLFDYAEPGNFSDISWPCNSSDCIVVDTVLCPNMPNK. Residues N13, N22, and N39 are each glycosylated (N-linked (GlcNAc...) asparagine). Residues 41–61 form a helical membrane-spanning segment; the sequence is SVLLYTLSFIYIFIFVIGMIA. The Cytoplasmic segment spans residues 62–81; it reads NSVVVWVNIQAKTTGYDTHC. The chain crosses the membrane as a helical span at residues 82–102; the sequence is YILNLAIADLWVVVTIPVWVV. Residues 103 to 118 lie on the Extracellular side of the membrane; that stretch reads SLVQHNQWPMGELTCK. C117 and C196 are disulfide-bonded. A helical transmembrane segment spans residues 119-139; the sequence is ITHLIFSINLFGSIFFLTCMS. The Cytoplasmic segment spans residues 140–162; it reads VDRYLSITYFASTSSRRKKVVRR. Residues 163–183 form a helical membrane-spanning segment; it reads AVCVLVWLLAFCVSLPDTYYL. The Extracellular portion of the chain corresponds to 184–213; it reads KTVTSASNNETYCRSFYPEHSVKEWLISME. The chain crosses the membrane as a helical span at residues 214–234; that stretch reads LVSVVLGFAIPFCVIAVFYCL. Residues 235-252 are Cytoplasmic-facing; sequence LARAISASSDQEKQSSRK. The chain crosses the membrane as a helical span at residues 253–273; that stretch reads IIFSYVVVFLVCWLPYHVVVL. Residues 274-296 are Extracellular-facing; the sequence is LDIFSILHYIPFTCQLENFLFTA. Residues 297–319 form a helical membrane-spanning segment; the sequence is LHVTQCLSLVHCCVNPVLYSFIN. The Cytoplasmic portion of the chain corresponds to 320 to 362; sequence RNYRYELMKAFIFKYSAKTGLTKLIDASRVSETEYSALEQNAK. Residues 324-362 are C-terminal cytoplasmic tail; that stretch reads YELMKAFIFKYSAKTGLTKLIDASRVSETEYSALEQNAK. Phosphoserine occurs at positions 347, 350, and 355.

Belongs to the G-protein coupled receptor 1 family. Atypical chemokine receptor subfamily. As to quaternary structure, homodimer. Can form heterodimers with CXCR4; heterodimerization may regulate CXCR4 signaling activity. Interacts with ARRB1 and ARRB2. Post-translationally, the Ser/Thr residues in the C-terminal cytoplasmic tail may be phosphorylated. Ubiquitinated at the Lys residues in its C-terminal cytoplasmic tail and is essential for correct trafficking from and to the cell membrane. Deubiquitinated by CXCL12-stimulation in a reversible manner.

It is found in the cell membrane. The protein localises to the early endosome. It localises to the recycling endosome. Functionally, atypical chemokine receptor that controls chemokine levels and localization via high-affinity chemokine binding that is uncoupled from classic ligand-driven signal transduction cascades, resulting instead in chemokine sequestration, degradation, or transcytosis. Also known as interceptor (internalizing receptor) or chemokine-scavenging receptor or chemokine decoy receptor. Acts as a receptor for chemokines CXCL11 and CXCL12/SDF1. Chemokine binding does not activate G-protein-mediated signal transduction but instead induces beta-arrestin recruitment, leading to ligand internalization and activation of MAPK signaling pathway. Required for regulation of CXCR4 protein levels in migrating interneurons, thereby adapting their chemokine responsiveness. In glioma cells, transduces signals via MEK/ERK pathway, mediating resistance to apoptosis. Promotes cell growth and survival. Not involved in cell migration, adhesion or proliferation of normal hematopoietic progenitors but activated by CXCL11 in malignant hemapoietic cells, leading to phosphorylation of ERK1/2 (MAPK3/MAPK1) and enhanced cell adhesion and migration. Plays a regulatory role in CXCR4-mediated activation of cell surface integrins by CXCL12. Required for heart valve development. Regulates axon guidance in the oculomotor system through the regulation of CXCL12 levels. The protein is Atypical chemokine receptor 3 (ACKR3) of Canis lupus familiaris (Dog).